The chain runs to 1997 residues: Otoferlin (1997 aa).

The region spanning 1 to 98 (MALLIHLKTV…VEESHVEVTD (98 aa)) is the C2 1 domain. Over 1 to 1963 (MALLIHLKTV…ARYFLWHTYR (1963 aa)) the chain is Cytoplasmic. The disordered stretch occupies residues 128 to 171 (WDDGDFLGDESLQEEEKDSQETDGLLPGSRPSSRPPGEKSFRRA). Residues 129–145 (DDGDFLGDESLQEEEKD) show a composition bias toward acidic residues. C2 domains are found at residues 236-357 (KRSK…HKWA) and 400-531 (IEGN…FLPT). The interval 642–694 (NEVDGLSRPQRPRPRKEPGDEEEVDLIQNASDDEAGDAGDLASVSSTPPMRPQ) is disordered. The segment covering 660–678 (GDEEEVDLIQNASDDEAGD) has biased composition (acidic residues). Residues 792 to 821 (RERLKSCMRELENMGQQARMLRAQVKRHTV) adopt a coiled-coil conformation. C2 domains are found at residues 944-1069 (LHAF…PPRF) and 1115-1242 (DRGP…PSWN). Residues Asp976, Asp982, Asp1038, Asp1040, and Asp1046 each coordinate Ca(2+). Disordered stretches follow at residues 1299 to 1324 (AEEE…PDES) and 1343 to 1405 (LRQQ…KPKI). Acidic residues-rich tracts occupy residues 1314–1324 (EEPEEEEPDES) and 1352–1361 (DLEEKEEVDN). Over residues 1370–1383 (KGKEKARAAKEEKK) the composition is skewed to basic and acidic residues. Residues 1387–1396 (QSSGSGQGSE) are compositionally biased toward low complexity. 2 C2 domains span residues 1464–1593 (LPED…ATCG) and 1714–1865 (DMPA…KQCT). Ca(2+)-binding residues include Asp1508, Asp1514, Asp1563, Asp1565, Asp1571, Asp1836, Ser1839, and Asp1842. The chain crosses the membrane as a helical span at residues 1964–1984 (WLLLKLLLLLLLLLLLALFLY). The Extracellular portion of the chain corresponds to 1985–1997 (SVPGYLVKKILGA).

This sequence belongs to the ferlin family. As to quaternary structure, interacts with SNAP2; the interaction is direct. Interacts with STX1; the interaction is direct. Interacts with RAB8B. Ca(2+) is required as a cofactor. Isoform 1 and isoform 3 are found in adult brain. Isoform 2 is expressed in the fetus and in adult brain, heart, placenta, skeletal muscle and kidney.

It localises to the cytoplasmic vesicle. The protein resides in the secretory vesicle. The protein localises to the synaptic vesicle membrane. It is found in the basolateral cell membrane. Its subcellular location is the endoplasmic reticulum membrane. It localises to the golgi apparatus membrane. The protein resides in the presynaptic cell membrane. The protein localises to the cell membrane. Key calcium ion sensor involved in the Ca(2+)-triggered synaptic vesicle-plasma membrane fusion and in the control of neurotransmitter release at these output synapses. Interacts in a calcium-dependent manner to the presynaptic SNARE proteins at ribbon synapses of cochlear inner hair cells (IHCs) to trigger exocytosis of neurotransmitter. Also essential to synaptic exocytosis in immature outer hair cells (OHCs). May also play a role within the recycling of endosomes. The chain is Otoferlin (OTOF) from Homo sapiens (Human).